The chain runs to 82 residues: Probable glutamyl-tRNA(Gln) amidotransferase subunit C (82 aa).

The protein belongs to the GatC family. In terms of assembly, heterotrimer of A, B and C subunits.

It catalyses the reaction L-glutamyl-tRNA(Gln) + L-glutamine + ATP + H2O = L-glutaminyl-tRNA(Gln) + L-glutamate + ADP + phosphate + H(+). The catalysed reaction is L-aspartyl-tRNA(Asn) + L-glutamine + ATP + H2O = L-asparaginyl-tRNA(Asn) + L-glutamate + ADP + phosphate + 2 H(+). Its function is as follows. Allows the formation of correctly charged Asn-tRNA(Asn) or Gln-tRNA(Gln) through the transamidation of misacylated Asp-tRNA(Asn) or Glu-tRNA(Gln) in organisms which lack either or both of asparaginyl-tRNA or glutaminyl-tRNA synthetases. The reaction takes place in the presence of glutamine and ATP through an activated phospho-Asp-tRNA(Asn) or phospho-Glu-tRNA(Gln). The chain is Probable glutamyl-tRNA(Gln) amidotransferase subunit C from Methanocaldococcus jannaschii (strain ATCC 43067 / DSM 2661 / JAL-1 / JCM 10045 / NBRC 100440) (Methanococcus jannaschii).